Reading from the N-terminus, the 271-residue chain is Formamidopyrimidine-DNA glycosylase (271 aa).

The active-site Schiff-base intermediate with DNA is P2. E3 functions as the Proton donor in the catalytic mechanism. The active-site Proton donor; for beta-elimination activity is the K57. DNA-binding residues include H90, R109, and K151. Residues 236 to 270 form an FPG-type zinc finger; that stretch reads HVYGRGGETCTQCGNLLSEIRLGQRTTVFCGICQT. R260 serves as the catalytic Proton donor; for delta-elimination activity.

Belongs to the FPG family. In terms of assembly, monomer. Zn(2+) is required as a cofactor.

It carries out the reaction Hydrolysis of DNA containing ring-opened 7-methylguanine residues, releasing 2,6-diamino-4-hydroxy-5-(N-methyl)formamidopyrimidine.. The catalysed reaction is 2'-deoxyribonucleotide-(2'-deoxyribose 5'-phosphate)-2'-deoxyribonucleotide-DNA = a 3'-end 2'-deoxyribonucleotide-(2,3-dehydro-2,3-deoxyribose 5'-phosphate)-DNA + a 5'-end 5'-phospho-2'-deoxyribonucleoside-DNA + H(+). In terms of biological role, involved in base excision repair of DNA damaged by oxidation or by mutagenic agents. Acts as a DNA glycosylase that recognizes and removes damaged bases. Has a preference for oxidized purines, such as 7,8-dihydro-8-oxoguanine (8-oxoG). Has AP (apurinic/apyrimidinic) lyase activity and introduces nicks in the DNA strand. Cleaves the DNA backbone by beta-delta elimination to generate a single-strand break at the site of the removed base with both 3'- and 5'-phosphates. The polypeptide is Formamidopyrimidine-DNA glycosylase (Shewanella sp. (strain MR-4)).